Here is a 679-residue protein sequence, read N- to C-terminus: Penicillin-binding protein PbpB (679 aa).

The disordered stretch occupies residues 1 to 74 (MSRAAPRRAS…STRARRTRQV (74 aa)). Residues 1–90 (MSRAAPRRAS…GASFVFRHRT (90 aa)) lie on the Cytoplasmic side of the membrane. Polar residues predominate over residues 42–54 (ARQAQEATKSRPA). The helical transmembrane segment at 91–111 (GNAVILVLMLVAATQLFFLQV) threads the bilayer. Over 112-679 (SHAAGLRAQA…PGPPLVLQAT (568 aa)) the chain is Extracellular. The active-site Acyl-ester intermediate is the Ser386.

It belongs to the transpeptidase family. Interacts with Wag31. In terms of processing, cleaved by Rip1 in response to oxidative stress (H(2)O(2)), prevented by Wag31. Cleavage probably occurs near residues 102-103.

It is found in the cell membrane. Its pathway is cell wall biogenesis; peptidoglycan biosynthesis. Its function is as follows. Synthesis of cross-linked peptidoglycan from the lipid intermediates. The polypeptide is Penicillin-binding protein PbpB (pbpB) (Mycobacterium tuberculosis (strain ATCC 25618 / H37Rv)).